Consider the following 288-residue polypeptide: HTH-type transcriptional regulator YofA (288 aa).

The 58-residue stretch at 1–58 (MESGDLKIFQAVARKGSISKAAESLHYVQSNVTNRIQQLERQLQTQLFYRTNRGMTLT) folds into the HTH lysR-type domain. The H-T-H motif DNA-binding region spans 18–37 (ISKAAESLHYVQSNVTNRIQ).

The protein belongs to the LysR transcriptional regulatory family.

The protein resides in the cytoplasm. Regulates expression of the cell division protein ftsW, and is essential for cell viability during stationary phase. The protein is HTH-type transcriptional regulator YofA (yofA) of Bacillus velezensis (strain DSM 23117 / BGSC 10A6 / LMG 26770 / FZB42) (Bacillus amyloliquefaciens subsp. plantarum).